The primary structure comprises 242 residues: Ribosomal RNA small subunit methyltransferase G (242 aa).

Residues G81, F86, 104 to 106 (DST), 132 to 133 (AE), and R151 each bind S-adenosyl-L-methionine.

It belongs to the methyltransferase superfamily. RNA methyltransferase RsmG family.

It is found in the cytoplasm. Its function is as follows. Specifically methylates the N7 position of a guanine in 16S rRNA. The sequence is that of Ribosomal RNA small subunit methyltransferase G from Synechococcus elongatus (strain ATCC 33912 / PCC 7942 / FACHB-805) (Anacystis nidulans R2).